We begin with the raw amino-acid sequence, 136 residues long: Class I hydrophobin A (136 aa).

A signal peptide spans 1-16; it reads MRFALAITTLIAAVTA. Cystine bridges form between C39–C109, C47–C103, C48–C85, and C110–C128.

Belongs to the fungal hydrophobin family. In terms of tissue distribution, expressed in aerial conidia, in vitro blastospores, submerged conidia, and cells sporulating on chitin and insect cuticle, with hyd1 expression peaking in growing mycelia.

It is found in the secreted. The protein localises to the cell wall. It localises to the spore coat. The protein resides in the vacuole. Its subcellular location is the cytoplasmic vesicle. Aerial growth, conidiation, and dispersal of filamentous fungi in the environment rely upon a capability of their secreting small amphipathic proteins called hydrophobins (HPBs) with low sequence identity. Class I can self-assemble into an outermost layer of rodlet bundles on aerial cell surfaces, conferring cellular hydrophobicity that supports fungal growth, development and dispersal; whereas Class II form highly ordered films at water-air interfaces through intermolecular interactions but contribute nothing to the rodlet structure. Hyd1A contributes to certain cell wall-related features, such as hydrophobicity but is not involved in cell wall-related events during fungal proliferation in host hemocoel. Hyd1A and hyd1B coregulate the formation, morphology and orderly assembly of rodlet bundles required for conidial hydrophobicity and infectivity. Contributes to the spore coat rodlet layer. The sequence is that of Class I hydrophobin A from Beauveria bassiana (strain ARSEF 2860) (White muscardine disease fungus).